The chain runs to 170 residues: MQYTGSQYFGEYINGRMEGSAEYILPTDTRYIGEMKDGMFHGEGTLFFPSGSRFDAIWKKGLVVKGKYTFNDGLQYEDKHWHYCDSYDRRFYTEICYGLKPSGISQLTNMDPPRRIPLGYYDCGDGFYNPTTRVIKDYRNRFLRNADDDEHEWIVRTCRKGWLPMPKQKS.

MORN repeat units follow at residues 8–30 (YFGE…TDTR), 31–53 (YIGE…SGSR), and 54–75 (FDAI…DGLQ).

In terms of tissue distribution, only detected in testis (at protein level).

The protein resides in the cell projection. It is found in the cilium. The protein localises to the flagellum. This Mus musculus (Mouse) protein is MORN repeat-containing protein 5 (Morn5).